The chain runs to 502 residues: MKRVQTAEEREREAKKLRLLEELEDTWLPYLTPKDDEFYQQWQLKYPKLVFREAGSIPEELHKEVPEAFLTLHKHGCLFRDLVRIQGKDVLTPVSRILIGDPGCTYKYLNTRLFTVPWPVKGCTINYTEAEIAAACQTFLKLNDYLQVETIQALEELAIKEKANEDAVPLCMAEFPRAGVGPSCDDEVDLKSRAAYNVTLLNFMDPQKMPYLKEEPYFGMGKMAVSWHHDENLVDRSAVAVYSYSCEGSEDESDDESSFEGRDPDTWHVGFKISWDIETPGLTIPLHQGDCYFMLDDLNATHQHCVLAGSQPRFSSTHRVAECSTGTLDYILQRCQLALQNVLNDSDNGDVSLKSFEPAVLKQGEEIHNEVEFEWLRQFWFQGNRYKICTDWWCEPMTQLEGLWKKMESVTNAVLREVKREGLSVEQRSEILSAVLIPLTMRQNLRKEWHARCQARVVRTLPAQQKPDCRPYWEKDDPSMPLPFDLTDVVSEIRSQLLEARS.

The tract at residues 32 to 324 (TPKDDEFYQQ…SSTHRVAECS (293 aa)) is fe2OG dioxygenase domain. Substrate is bound by residues arginine 96 and tyrosine 108. Asparagine 202 is a 2-oxoglutarate binding site. A loop L1; predicted to block binding of double-stranded DNA or RNA region spans residues 210–221 (PYLKEEPYFGMG). N6-acetyllysine is present on lysine 213. Fe cation-binding residues include histidine 228 and aspartate 230. 228 to 231 (HHDE) contacts substrate. Residue tyrosine 292 participates in 2-oxoglutarate binding. Histidine 304 serves as a coordination point for Fe cation. 2-oxoglutarate-binding positions include 313–315 (RFS), threonine 317, and arginine 319.

Belongs to the fto family. Monomer. May also exist as homodimer. Fe(2+) is required as a cofactor. As to expression, ubiquitous. Highly expressed in teeth and weakly in bone.

It localises to the nucleus. It is found in the nucleus speckle. Its subcellular location is the cytoplasm. It catalyses the reaction a 5'-end (N(7)-methyl 5'-triphosphoguanosine)-(N(6),2'-O-dimethyladenosine) in mRNA + 2-oxoglutarate + O2 = a 5'-end (N(7)-methyl 5'-triphosphoguanosine)-(2'-O-methyladenosine) in mRNA + formaldehyde + succinate + CO2. The enzyme catalyses an N(6)-methyladenosine in mRNA + 2-oxoglutarate + O2 = an adenosine in mRNA + formaldehyde + succinate + CO2. The catalysed reaction is N(6)-methyladenosine in U6 snRNA + 2-oxoglutarate + O2 = adenosine in U6 snRNA + formaldehyde + succinate + CO2. It carries out the reaction a 5'-end (N(7)-methyl 5'-triphosphoguanosine)-(N(6),2'-O-dimethyladenosine) in U6 snRNA + 2-oxoglutarate + O2 = a 5'-end (N(7)-methyl 5'-triphosphoguanosine)-(2'-O-methyladenosine) in U6 snRNA + formaldehyde + succinate + CO2. It catalyses the reaction an N(1)-methyladenosine in tRNA + 2-oxoglutarate + O2 = an adenosine in tRNA + formaldehyde + succinate + CO2. With respect to regulation, activated by ascorbate. Inhibited by N-oxalylglycine, fumarate and succinate. In terms of biological role, RNA demethylase that mediates oxidative demethylation of different RNA species, such as mRNAs, tRNAs and snRNAs, and acts as a regulator of fat mass, adipogenesis and energy homeostasis. Specifically demethylates N(6)-methyladenosine (m6A) RNA, the most prevalent internal modification of messenger RNA (mRNA) in higher eukaryotes. M6A demethylation by FTO affects mRNA expression and stability. Also able to demethylate m6A in U6 small nuclear RNA (snRNA). Mediates demethylation of N(6),2'-O-dimethyladenosine cap (m6A(m)), by demethylating the N(6)-methyladenosine at the second transcribed position of mRNAs and U6 snRNA. Demethylation of m6A(m) in the 5'-cap by FTO affects mRNA stability by promoting susceptibility to decapping. Also acts as a tRNA demethylase by removing N(1)-methyladenine from various tRNAs. Has no activity towards 1-methylguanine. Has no detectable activity towards double-stranded DNA. Also able to repair alkylated DNA and RNA by oxidative demethylation: demethylates single-stranded RNA containing 3-methyluracil, single-stranded DNA containing 3-methylthymine and has low demethylase activity towards single-stranded DNA containing 1-methyladenine or 3-methylcytosine. Ability to repair alkylated DNA and RNA is however unsure in vivo. Involved in the regulation of fat mass, adipogenesis and body weight, thereby contributing to the regulation of body size and body fat accumulation. Involved in the regulation of thermogenesis and the control of adipocyte differentiation into brown or white fat cells. Regulates activity of the dopaminergic midbrain circuitry via its ability to demethylate m6A in mRNAs. This chain is Alpha-ketoglutarate-dependent dioxygenase FTO, found in Rattus norvegicus (Rat).